The sequence spans 91 residues: Acylphosphatase (91 aa).

In terms of domain architecture, Acylphosphatase-like spans 5-91; that stretch reads WKKWNVRGVV…QEYKDFHVEF (87 aa). Active-site residues include R20 and N38.

Belongs to the acylphosphatase family.

It catalyses the reaction an acyl phosphate + H2O = a carboxylate + phosphate + H(+). In Fervidobacterium nodosum (strain ATCC 35602 / DSM 5306 / Rt17-B1), this protein is Acylphosphatase (acyP).